The primary structure comprises 414 residues: Alanine--glyoxylate aminotransferase (414 aa).

Residues 1-23 (MFQALAKASAALGPRAAGWVRTM) constitute a mitochondrion transit peptide. Lysine 231 is modified (N6-(pyridoxal phosphate)lysine). N6-acetyllysine is present on residues lysine 256 and lysine 334. Residue arginine 382 participates in substrate binding.

The protein belongs to the class-V pyridoxal-phosphate-dependent aminotransferase family. As to quaternary structure, homodimer. Pyridoxal 5'-phosphate serves as cofactor.

The protein localises to the peroxisome. Its subcellular location is the mitochondrion matrix. The enzyme catalyses L-serine + pyruvate = 3-hydroxypyruvate + L-alanine. It catalyses the reaction glyoxylate + L-alanine = glycine + pyruvate. Functionally, catalyzes the transamination of glyoxylate to glycine and contributes to the glyoxylate detoxification. Its function is as follows. Catalyzes the transamination between L-serine and pyruvate and weakly contributes to gluconeogenesis from the L-serine metabolism. This is Alanine--glyoxylate aminotransferase from Callithrix jacchus (White-tufted-ear marmoset).